A 130-amino-acid polypeptide reads, in one-letter code: uncharacterized protein (130 aa).

2 disordered regions span residues 1 to 47 (MTFY…QSNT) and 78 to 130 (QTLE…SESS). The segment covering 13–33 (QWKQLQTQQNKKNSPRPVTSS) has biased composition (polar residues). Positions 86–110 (PSKHKRKRTKYRRTKKSKHHSRKKT) are enriched in basic residues. The span at 117-130 (SERDSTTGRESESS) shows a compositional bias: basic and acidic residues.

This is an uncharacterized protein from Torque teno mini virus 1 (isolate TLMV-CBD279).